The chain runs to 147 residues: Small ribosomal subunit protein uS12 (147 aa).

The protein belongs to the universal ribosomal protein uS12 family. As to quaternary structure, part of the 30S ribosomal subunit.

In terms of biological role, with S4 and S5 plays an important role in translational accuracy. Located at the interface of the 30S and 50S subunits. This is Small ribosomal subunit protein uS12 from Pyrobaculum arsenaticum (strain DSM 13514 / JCM 11321 / PZ6).